We begin with the raw amino-acid sequence, 227 residues long: MRHEAPMQMASAQDARFGQKDSSDQNFDYMFKLLIIGNSSVGKTSFLFRYADDSFTSAFVSTVGIDFKVKTVFKNEKRIKLQIWDTAGQERYRTITTAYYRGAMGFILMYDITNEESFNAVQDWSTQIKTYSWDNAQVILAGNKCDMEDERVVSTERGQRLGEQLGFEFFETSAKDNINVKQTFERLVDIICDKMSESLETDPAITAAKQSTRLKETPPPPQPNCGC.

Residues S39, G42, K43, T44, S45, T56, S57, S61, and T62 each coordinate GTP. T44 serves as a coordination point for Mg(2+). The short motif at D53–D66 is the Switch 1 element. Residues T62 and D85 each coordinate Mg(2+). T86 carries the phosphothreonine; by LRRK2 modification. The Switch 2 signature appears at T86 to M104. 6 residues coordinate GTP: G88, N143, K144, D146, A174, and K175. Phosphoserine is present on residues S196 and S198. The disordered stretch occupies residues D202 to C227. T206 is subject to Phosphothreonine. The span at T217–C227 shows a compositional bias: pro residues. 2 S-geranylgeranyl cysteine lipidation sites follow: C225 and C227. Residue C227 is modified to Cysteine methyl ester.

It belongs to the small GTPase superfamily. Rab family. As to quaternary structure, interacts with RIMS1, RIMS2, RPH3A and RPH3AL. Interacts with GDI2, CHM and CHML; phosphorylation at Thr-86 disrupts these interactions. Interacts with MADD (via uDENN domain); the GTP-bound form is preferred for interaction. It depends on Mg(2+) as a cofactor. Phosphorylation of Thr-86 in the switch II region by LRRK2 prevents the association of RAB regulatory proteins, including CHM, CHML and RAB GDP dissociation inhibitor GDI2.

Its subcellular location is the cell membrane. The enzyme catalyses GTP + H2O = GDP + phosphate + H(+). Its activity is regulated as follows. Regulated by guanine nucleotide exchange factors (GEFs) which promote the exchange of bound GDP for free GTP. Regulated by GTPase activating proteins (GAPs) which increase the GTP hydrolysis activity. Inhibited by GDP dissociation inhibitors (GDIs) which prevent Rab-GDP dissociation. In terms of biological role, the small GTPases Rab are key regulators of intracellular membrane trafficking, from the formation of transport vesicles to their fusion with membranes. Rabs cycle between an inactive GDP-bound form and an active GTP-bound form that is able to recruit to membranes different sets of downstream effectors directly responsible for vesicle formation, movement, tethering and fusion. The chain is Ras-related protein Rab-3C from Mus musculus (Mouse).